The sequence spans 174 residues: MTNLSVIAKPYAKAAFEFANEYNLLQEWSKQLKSFAELVQDDAIAAIISSPEISQTEIINTVKDQLDEKFFNFVALVAENKKLSILPEISFQFENIRNVHNNIKVADVTLAYAIDKNTLANLKTKLEEKFSCSIDMNVIIDPVILGGAVIKVGDTVIDDSVSGRIETLKSILLS.

It belongs to the ATPase delta chain family. As to quaternary structure, F-type ATPases have 2 components, F(1) - the catalytic core - and F(0) - the membrane proton channel. F(1) has five subunits: alpha(3), beta(3), gamma(1), delta(1), epsilon(1). F(0) has three main subunits: a(1), b(2) and c(10-14). The alpha and beta chains form an alternating ring which encloses part of the gamma chain. F(1) is attached to F(0) by a central stalk formed by the gamma and epsilon chains, while a peripheral stalk is formed by the delta and b chains.

The protein localises to the cell inner membrane. Its function is as follows. F(1)F(0) ATP synthase produces ATP from ADP in the presence of a proton or sodium gradient. F-type ATPases consist of two structural domains, F(1) containing the extramembraneous catalytic core and F(0) containing the membrane proton channel, linked together by a central stalk and a peripheral stalk. During catalysis, ATP synthesis in the catalytic domain of F(1) is coupled via a rotary mechanism of the central stalk subunits to proton translocation. This protein is part of the stalk that links CF(0) to CF(1). It either transmits conformational changes from CF(0) to CF(1) or is implicated in proton conduction. This Francisella philomiragia subsp. philomiragia (strain ATCC 25017 / CCUG 19701 / FSC 153 / O#319-036) protein is ATP synthase subunit delta.